We begin with the raw amino-acid sequence, 176 residues long: Small ribosomal subunit protein uS5 (176 aa).

The S5 DRBM domain maps to 15 to 78; it reads FEERIVEIRR…SAARRNVFEV (64 aa).

This sequence belongs to the universal ribosomal protein uS5 family. As to quaternary structure, part of the 30S ribosomal subunit. Contacts proteins S4 and S8.

Functionally, with S4 and S12 plays an important role in translational accuracy. Located at the back of the 30S subunit body where it stabilizes the conformation of the head with respect to the body. The protein is Small ribosomal subunit protein uS5 of Thermosipho africanus (strain TCF52B).